A 426-amino-acid polypeptide reads, in one-letter code: 26S proteasome regulatory subunit 7B (426 aa).

Position 209-216 (209-216 (GPPGTGKT)) interacts with ATP.

It belongs to the AAA ATPase family.

The protein localises to the cytoplasm. It is found in the nucleus. In terms of biological role, the 26S proteasome is involved in the ATP-dependent degradation of ubiquitinated proteins. The regulatory (or ATPase) complex confers ATP dependency and substrate specificity to the 26S complex. The protein is 26S proteasome regulatory subunit 7B (RPT1B) of Oryza sativa subsp. japonica (Rice).